Reading from the N-terminus, the 359-residue chain is UDP-3-O-acylglucosamine N-acyltransferase (359 aa).

Catalysis depends on H248, which acts as the Proton acceptor.

This sequence belongs to the transferase hexapeptide repeat family. LpxD subfamily. Homotrimer.

The enzyme catalyses a UDP-3-O-[(3R)-3-hydroxyacyl]-alpha-D-glucosamine + a (3R)-hydroxyacyl-[ACP] = a UDP-2-N,3-O-bis[(3R)-3-hydroxyacyl]-alpha-D-glucosamine + holo-[ACP] + H(+). It functions in the pathway bacterial outer membrane biogenesis; LPS lipid A biosynthesis. Its function is as follows. Catalyzes the N-acylation of UDP-3-O-acylglucosamine using 3-hydroxyacyl-ACP as the acyl donor. Is involved in the biosynthesis of lipid A, a phosphorylated glycolipid that anchors the lipopolysaccharide to the outer membrane of the cell. The protein is UDP-3-O-acylglucosamine N-acyltransferase of Chlamydia abortus (strain DSM 27085 / S26/3) (Chlamydophila abortus).